A 486-amino-acid polypeptide reads, in one-letter code: Glycogen synthase (486 aa).

ADP-alpha-D-glucose is bound at residue K20.

It belongs to the glycosyltransferase 1 family. Bacterial/plant glycogen synthase subfamily.

It catalyses the reaction [(1-&gt;4)-alpha-D-glucosyl](n) + ADP-alpha-D-glucose = [(1-&gt;4)-alpha-D-glucosyl](n+1) + ADP + H(+). It participates in glycan biosynthesis; glycogen biosynthesis. Functionally, synthesizes alpha-1,4-glucan chains using ADP-glucose. The protein is Glycogen synthase of Aeromonas hydrophila subsp. hydrophila (strain ATCC 7966 / DSM 30187 / BCRC 13018 / CCUG 14551 / JCM 1027 / KCTC 2358 / NCIMB 9240 / NCTC 8049).